Here is a 689-residue protein sequence, read N- to C-terminus: Glycine--tRNA ligase beta subunit (689 aa).

It belongs to the class-II aminoacyl-tRNA synthetase family. As to quaternary structure, tetramer of two alpha and two beta subunits.

Its subcellular location is the cytoplasm. The enzyme catalyses tRNA(Gly) + glycine + ATP = glycyl-tRNA(Gly) + AMP + diphosphate. The chain is Glycine--tRNA ligase beta subunit from Erwinia tasmaniensis (strain DSM 17950 / CFBP 7177 / CIP 109463 / NCPPB 4357 / Et1/99).